Reading from the N-terminus, the 524-residue chain is Sterol O-acyltransferase 2 (524 aa).

The interval methionine 1–histidine 31 is disordered. Topologically, residues methionine 1 to phenylalanine 118 are cytoplasmic. Histidine 117 contacts cholesterol. The helical transmembrane segment at arginine 119 to aspartate 140 threads the bilayer. The Lumenal segment spans residues phenylalanine 141–glutamine 160. A helical membrane pass occupies residues leucine 161–tryptophan 186. Residues alanine 187 to glycine 198 lie on the Cytoplasmic side of the membrane. A helical membrane pass occupies residues alanine 199–valine 222. Over lysine 223–serine 230 the chain is Lumenal. Residues arginine 231 to proline 254 form a helical membrane-spanning segment. At glycine 255–arginine 295 the chain is on the cytoplasmic side. A Cysteine sulfenic acid (-SOH); alternate modification is found at cysteine 279. Residue cysteine 279 forms a Glycyl cysteine thioester (Cys-Gly) (interchain with G-Cter in ubiquitin); alternate linkage. Residues tryptophan 296 to methionine 328 form a helical membrane-spanning segment. Topologically, residues serine 329–alanine 345 are lumenal. Residues threonine 346–methionine 371 traverse the membrane as a helical segment. Over leucine 372–glutamine 419 the chain is Cytoplasmic. The short motif at phenylalanine 379–asparagine 385 is the FYXDWWN motif element. An acyl-CoA contacts are provided by asparagine 391, arginine 394, asparagine 397, histidine 401, tyrosine 409, and serine 432. Residues glycine 420 to leucine 444 traverse the membrane as a helical segment. The active site involves histidine 436. Residues glycine 445–valine 450 are Lumenal-facing. Residues methionine 451–methionine 466 traverse the membrane as a helical segment. Residues asparagine 467 to glycine 472 lie on the Cytoplasmic side of the membrane. A helical transmembrane segment spans residues proline 473–cysteine 504. The Lumenal segment spans residues proline 505 to proline 524.

Belongs to the membrane-bound acyltransferase family. Sterol o-acyltransferase subfamily. In terms of assembly, may form homo- or heterodimers. Interacts with INSIG1; the interaction is direct and promotes association with AMFR/gp78. Post-translationally, polyubiquitinated by AMFR/gp78 at Cys-279, leading to its degradation when the lipid levels are low. Association with AMFR/gp78 is mediated via interaction with INSIG1. High concentration of cholesterol and fatty acid results in Cys-279 oxidation, preventing ubiquitination at the same site, resulting in protein stabilization. In terms of processing, oxidized at Cys-279: high concentration of cholesterol and fatty acid induce reactive oxygen species, which oxidizes Cys-279, preventing ubiquitination at the same site, and resulting in protein stabilization.

It is found in the endoplasmic reticulum membrane. The catalysed reaction is a sterol + a long-chain fatty acyl-CoA = a long-chain 3-hydroxysterol ester + CoA. It carries out the reaction cholesterol + an acyl-CoA = a cholesterol ester + CoA. The enzyme catalyses cholesterol + (9Z)-octadecenoyl-CoA = cholesteryl (9Z-octadecenoate) + CoA. It catalyses the reaction (5Z,8Z,11Z,14Z,17Z)-eicosapentaenoyl-CoA + cholesterol = (5Z,8Z,11Z,14Z,17Z-eicosapentaenoyl)-cholesterol + CoA. The catalysed reaction is (9Z,12Z,15Z)-octadecatrienoyl-CoA + cholesterol = (9Z,12Z,15Z-octadecatrienoyl)-cholesterol + CoA. It carries out the reaction (5Z,8Z,11Z,14Z)-eicosatetraenoyl-CoA + cholesterol = cholesteryl (5Z,8Z,11Z,14Z)-eicosatetraenoate + CoA. Functionally, catalyzes the formation of fatty acid-cholesterol esters, which are less soluble in membranes than cholesterol. Plays a role in lipoprotein assembly and dietary cholesterol absorption. Utilizes oleoyl-CoA ((9Z)-octadecenoyl-CoA) and linolenoyl-CoA ((9Z,12Z,15Z)-octadecatrienoyl-CoA) as substrates. May provide cholesteryl esters for lipoprotein secretion from hepatocytes and intestinal mucosa. The polypeptide is Sterol O-acyltransferase 2 (Rattus norvegicus (Rat)).